The primary structure comprises 182 residues: Negative transcriptional regulator PadR (182 aa).

It belongs to the PadR family. In terms of assembly, homodimer.

It localises to the cytoplasm. Its activity is regulated as follows. PadR repressor activity is inhibited in the presence of phenolic acids, which directly modulate PadR binding to the promoter of padC, leading to the dissociation of PadR from the operator DNA and expression of padC. In the presence of MgCl(2), binding is not altered by phenolic acids. Its function is as follows. Transcriptional regulator involved in the regulation of the metabolism of phenolic acids. In the absence of phenolic acids, represses the expression of padC, which encodes a phenolic acid decarboxylase (PAD) involved in the detoxification of harmful phenolic acids. Acts by binding to the padC promoter region, preventing the transcription of the gene. In Bacillus subtilis (strain 168), this protein is Negative transcriptional regulator PadR.